The following is a 270-amino-acid chain: Transcription factor bHLH113 (270 aa).

The interval 109-153 is disordered; the sequence is CTVDKSTKSSTKKRTGTGNGQESDQNRKPGKKGKRNQEKSSVGIA. The 50-residue stretch at 144 to 193 folds into the bHLH domain; it reads NQEKSSVGIAKVRKERLGERIAALQQLVSPYGKTDAASVLHEAMGYIKFL.

As to quaternary structure, homodimer.

It localises to the nucleus. In Arabidopsis thaliana (Mouse-ear cress), this protein is Transcription factor bHLH113 (BHLH113).